Reading from the N-terminus, the 367-residue chain is Glutamate 5-kinase (367 aa).

Lysine 10 contributes to the ATP binding site. Substrate contacts are provided by serine 50, aspartate 137, and asparagine 149. ATP-binding positions include 169-170 (TD) and 211-217 (TGGMSTK). Residues 275–353 (AGEITVDEGA…QQIDAILGYE (79 aa)) enclose the PUA domain.

It belongs to the glutamate 5-kinase family.

It localises to the cytoplasm. The enzyme catalyses L-glutamate + ATP = L-glutamyl 5-phosphate + ADP. Its pathway is amino-acid biosynthesis; L-proline biosynthesis; L-glutamate 5-semialdehyde from L-glutamate: step 1/2. Catalyzes the transfer of a phosphate group to glutamate to form L-glutamate 5-phosphate. The protein is Glutamate 5-kinase of Salmonella agona (strain SL483).